The following is an 81-amino-acid chain: Cytochrome c oxidase subunit NDUFA4 (81 aa).

The Mitochondrial matrix segment spans residues 1–14; the sequence is MLRQIIGQAKKHPS. Lysine 10 is subject to N6-acetyllysine. A helical transmembrane segment spans residues 15–37; it reads LIPLFVFIGTGATGATLYLLRLA. The Mitochondrial intermembrane segment spans residues 38-81; sequence LFNPDVCWDRNNPEPWNKLGPNDQYKFYSVNVDYSKLKKERPDF. Serine 66 carries the post-translational modification Phosphoserine.

Belongs to the complex IV NDUFA4 subunit family. In terms of assembly, component of the cytochrome c oxidase (complex IV, CIV), a multisubunit enzyme composed of 14 subunits. The complex is composed of a catalytic core of 3 subunits MT-CO1, MT-CO2 and MT-CO3, encoded in the mitochondrial DNA, and 11 supernumerary subunits COX4I1 (or COX4I2), COX5A, COX5B, COX6A1 (or COX6A2), COX6B1 (or COX6B2), COX6C, COX7A2 (or COX7A1), COX7B, COX7C, COX8A and NDUFA4, which are encoded in the nuclear genome. The complex exists as a monomer or a dimer and forms supercomplexes (SCs) in the inner mitochondrial membrane with NADH-ubiquinone oxidoreductase (complex I, CI) and ubiquinol-cytochrome c oxidoreductase (cytochrome b-c1 complex, complex III, CIII), resulting in different assemblies (supercomplex SCI(1)III(2)IV(1) and megacomplex MCI(2)III(2)IV(2)). Interacts with RAB5IF. Interacts with FLVCR2; this interaction occurs in the absence of heme and is disrupted upon heme binding.

Its subcellular location is the mitochondrion inner membrane. Its function is as follows. Component of the cytochrome c oxidase, the last enzyme in the mitochondrial electron transport chain which drives oxidative phosphorylation. The respiratory chain contains 3 multisubunit complexes succinate dehydrogenase (complex II, CII), ubiquinol-cytochrome c oxidoreductase (cytochrome b-c1 complex, complex III, CIII) and cytochrome c oxidase (complex IV, CIV), that cooperate to transfer electrons derived from NADH and succinate to molecular oxygen, creating an electrochemical gradient over the inner membrane that drives transmembrane transport and the ATP synthase. Cytochrome c oxidase is the component of the respiratory chain that catalyzes the reduction of oxygen to water. Electrons originating from reduced cytochrome c in the intermembrane space (IMS) are transferred via the dinuclear copper A center (CU(A)) of subunit 2 and heme A of subunit 1 to the active site in subunit 1, a binuclear center (BNC) formed by heme A3 and copper B (CU(B)). The BNC reduces molecular oxygen to 2 water molecules unsing 4 electrons from cytochrome c in the IMS and 4 protons from the mitochondrial matrix. NDUFA4 is required for complex IV maintenance. The protein is Cytochrome c oxidase subunit NDUFA4 (NDUFA4) of Homo sapiens (Human).